We begin with the raw amino-acid sequence, 149 residues long: Natriuretic peptides A (149 aa).

Positions 1–23 are cleaved as a signal peptide; the sequence is MGSPIAASFLLFLAVQLLGQTGA. Propeptides lie at residues 24 to 121 and 91 to 101; these read NPVY…AAPR and DGGALGRSPWD. Residues 49–103 are disordered; sequence MPLEDEAESPQALSEQNAEAGAALSPLPEVPPWTGEVSPAQRDGGALGRSPWDSS. Position 127 is a phosphoserine (S127). A disulfide bond links C128 and C144. The important for degradation of atrial natriuretic peptide by IDE stretch occupies residues 145–149; the sequence is NSFRY.

Belongs to the natriuretic peptide family. Homodimer; disulfide-linked antiparallel dimer. Post-translationally, the precursor molecule is proteolytically cleaved by CORIN at Arg-121 to produce the atrial natriuretic peptide. Undergoes further proteolytic cleavage by unknown proteases to give rise to long-acting natriuretic peptide, vessel dilator and kaliuretic peptide. Additional processing gives rise to the auriculin and atriopeptin peptides. In the kidneys, alternative processing by an unknown protease results in the peptide urodilatin. In terms of processing, cleavage by MME initiates degradation of the factor and thereby regulates its activity. Degradation by IDE results in reduced activation of NPR1 (in vitro). During IDE degradation, the resulting products can temporarily stimulate NPR2 to produce cGMP, before the fragments are completely degraded and inactivated by IDE (in vitro). Degraded by IDE. Post-translationally, phosphorylation on Ser-127 decreases vasorelaxant activity.

The protein resides in the secreted. Its subcellular location is the perikaryon. It localises to the cell projection. In terms of biological role, hormone that plays a key role in mediating cardio-renal homeostasis, and is involved in vascular remodeling and regulating energy metabolism. Acts by specifically binding and stimulating NPR1 to produce cGMP, which in turn activates effector proteins, such as PRKG1, that drive various biological responses. Regulates vasodilation, natriuresis, diuresis and aldosterone synthesis and is therefore essential for regulating blood pressure, controlling the extracellular fluid volume and maintaining the fluid-electrolyte balance. Also involved in inhibiting cardiac remodeling and cardiac hypertrophy by inducing cardiomyocyte apoptosis and attenuating the growth of cardiomyocytes and fibroblasts. Plays a role in female pregnancy by promoting trophoblast invasion and spiral artery remodeling in uterus, and thus prevents pregnancy-induced hypertension. In adipose tissue, acts in various cGMP- and PKG-dependent pathways to regulate lipid metabolism and energy homeostasis. This includes up-regulating lipid metabolism and mitochondrial oxygen utilization by activating the AMP-activated protein kinase (AMPK), and increasing energy expenditure by acting via MAPK11 to promote the UCP1-dependent thermogenesis of brown adipose tissue. Binds the clearance receptor NPR3 which removes the hormone from circulation. May have a role in cardio-renal homeostasis through regulation of natriuresis, diuresis, vasodilation, and inhibiting aldosterone synthesis. In vitro, promotes the production of cGMP and induces vasodilation. May promote natriuresis, at least in part, by enhancing prostaglandin E2 synthesis resulting in the inhibition of renal Na+-K+-ATPase. However reports on the involvement of this peptide in mammal blood volume and blood pressure homeostasis are conflicting; according to a report, in vivo it is not sufficient to activate cGMP and does not inhibit collecting duct transport nor effect diuresis and natriuresis. Appears to bind to specific receptors that are distinct from the receptors bound by atrial natriuretic peptide and vessel dilator. Possibly enhances protein excretion in urine by decreasing proximal tubular protein reabsorption. Functionally, may have a role in cardio-renal homeostasis through regulation of natriuresis, diuresis, and vasodilation. In vitro, promotes the production of cGMP and induces vasodilation. May promote natriuresis, at least in part, by enhancing prostaglandin E2 synthesis resulting in the inhibition of renal Na+-K+-ATPase. However reports on the involvement of this peptide in mammal blood volume and blood pressure homeostasis are conflicting; according to a report it is not sufficient to activate cGMP and does not inhibit collecting duct transport nor effect diuresis and natriuresis. Appears to bind to specific receptors that are distinct from the receptors bound by the atrial natriuretic and long-acting natriuretic peptides. Possibly functions in protein excretion in urine by maintaining the integrity of the proximal tubules and enhancing protein excretion by decreasing proximal tubular protein reabsorption. Its function is as follows. May have a role in cardio-renal homeostasis through regulation of diuresis and inhibiting aldosterone synthesis. In vitro, promotes the production of cGMP and induces vasodilation. May promote natriuresis, at least in part, by enhancing prostaglandin E2 synthesis resulting in the inhibition of renal Na+-K+-ATPase. May have a role in potassium excretion but not sodium excretion (natriuresis). Possibly enhances protein excretion in urine by decreasing proximal tubular protein reabsorption. In terms of biological role, hormone produced in the kidneys that appears to be important for maintaining cardio-renal homeostasis. Mediates vasodilation, natriuresis and diuresis primarily in the renal system, in order to maintain the extracellular fluid volume and control the fluid-electrolyte balance. Specifically binds and stimulates cGMP production by renal transmembrane receptors, likely NPR1. Urodilatin not ANP, may be the natriuretic peptide responsible for the regulation of sodium and water homeostasis in the kidney. May have a role in cardio-renal homeostasis through regulation of natriuresis and vasodilation. In vivo promotes natriuresis and in vitro, vasodilates renal artery strips. Functionally, may have a role in cardio-renal homeostasis through regulation of regulation of natriuresis and vasodilation. In vivo promotes natriuresis. In vitro, vasodilates intestinal smooth muscle but not smooth muscle strips. Its function is as follows. May have a role in cardio-renal homeostasis through regulation of natriuresis and vasodilation. In vivo promotes natriuresis. In vitro, selectively vasodilates intestinal and vascular smooth muscle strips. In terms of biological role, may have a role in cardio-renal homeostasis through regulation of natriuresis and vasodilation. In vivo promotes natriuresis. In vitro, selectively vasodilates intestinal smooth muscle but not vascular smooth muscle strips. This is Natriuretic peptides A (NPPA) from Canis lupus familiaris (Dog).